We begin with the raw amino-acid sequence, 169 residues long: MAVREVRLFGDPVLVSRADEVVDFDESLSTLIDDMFDTMEDAGGVGLAANQVGVLRRVFVFDTSHQEGGLRGHVINPVWEPLTEDTQTGKEGCLSIPDVSAETTRYETVRLSGQDRDGNPVGFVANGLLARCIQHETDHLDGVLFLKRLDPAERKAAMGVIRASAWFNK.

Fe cation is bound by residues C93 and H135. E136 is an active-site residue. Fe cation is bound at residue H139.

Belongs to the polypeptide deformylase family. Fe(2+) serves as cofactor.

The enzyme catalyses N-terminal N-formyl-L-methionyl-[peptide] + H2O = N-terminal L-methionyl-[peptide] + formate. Its function is as follows. Removes the formyl group from the N-terminal Met of newly synthesized proteins. Requires at least a dipeptide for an efficient rate of reaction. N-terminal L-methionine is a prerequisite for activity but the enzyme has broad specificity at other positions. The protein is Peptide deformylase 1 of Corynebacterium glutamicum (strain ATCC 13032 / DSM 20300 / JCM 1318 / BCRC 11384 / CCUG 27702 / LMG 3730 / NBRC 12168 / NCIMB 10025 / NRRL B-2784 / 534).